Here is a 143-residue protein sequence, read N- to C-terminus: Cofilin/actin-depolymerizing factor homolog 2 (143 aa).

The ADF-H domain occupies 4–141; it reads GVKVSDECVY…FEDELRTIIL (138 aa).

It belongs to the actin-binding proteins ADF family. As to quaternary structure, interacts with monomeric actin, does not bind to actin polymers.

It is found in the cytoplasm. The protein localises to the cytoskeleton. Functionally, not involved in actin polymerisation, instead functions to stimulate nucleotide exchange on monomeric actin and influence turnover of the small amount of cytosolic actin microfilaments. Essential for erythrocytic schizogony. The protein is Cofilin/actin-depolymerizing factor homolog 2 of Plasmodium falciparum (isolate 3D7).